We begin with the raw amino-acid sequence, 352 residues long: Probable cytosolic iron-sulfur protein assembly protein CIAO1 homolog (352 aa).

WD repeat units lie at residues 14-53 (GHDD…PSEQ), 63-102 (CHTR…WEQV), 107-146 (GHEN…EFEC), 152-191 (GHSQ…WGCA), 200-240 (GHES…TSTP), 268-306 (HHRR…LTQP), and 319-352 (AHGA…WWLR).

The protein belongs to the WD repeat CIA1 family.

In terms of biological role, essential component of the cytosolic iron-sulfur (Fe/S) protein assembly machinery. Required for the maturation of extramitochondrial Fe/S proteins. The protein is Probable cytosolic iron-sulfur protein assembly protein CIAO1 homolog of Chlamydomonas reinhardtii (Chlamydomonas smithii).